The following is a 612-amino-acid chain: Rhamnogalacturonan exolyase YesX (612 aa).

A substrate-binding site is contributed by asparagine 119. Ca(2+) is bound by residues aspartate 120, aspartate 125, aspartate 127, aspartate 129, glutamate 131, and glutamate 133. Substrate is bound by residues aspartate 139, glutamate 154, and arginine 174. Residues aspartate 189, aspartate 191, aspartate 193, lysine 195, and glutamate 197 each coordinate Ca(2+). The substrate site is built by glycine 205 and arginine 222. Residues histidine 330, aspartate 336, aspartate 338, aspartate 340, lysine 342, glutamate 344, aspartate 353, histidine 354, histidine 366, aspartate 368, aspartate 374, aspartate 376, arginine 379, glycine 381, glutamate 383, and glutamate 389 each coordinate Ca(2+). Residue arginine 419 coordinates substrate. Residues aspartate 472, aspartate 474, valine 476, and glutamate 478 each contribute to the Ca(2+) site. Residue 516–518 (NGT) coordinates substrate. Residues asparagine 527, phenylalanine 529, aspartate 531, arginine 533, glutamate 535, asparagine 576, and alanine 578 each coordinate Ca(2+). Tyrosine 579 provides a ligand contact to substrate. Residue asparagine 580 coordinates Ca(2+).

It belongs to the polysaccharide lyase 11 family. As to quaternary structure, monomer. The cofactor is Mn(2+). Requires Zn(2+) as cofactor. Co(2+) is required as a cofactor. Ca(2+) serves as cofactor.

Its subcellular location is the secreted. It catalyses the reaction Exotype eliminative cleavage of alpha-L-rhamnopyranosyl-(1-&gt;4)-alpha-D-galactopyranosyluronic acid bonds of rhamnogalacturonan I oligosaccharides containing alpha-L-rhamnopyranose at the reducing end and 4-deoxy-4,5-unsaturated D-galactopyranosyluronic acid at the non-reducing end. The products are the disaccharide 2-O-(4-deoxy-beta-L-threo-hex-4-enopyranuronosyl)-alpha-L-rhamnopyranose and the shortened rhamnogalacturonan oligosaccharide containing one 4-deoxy-4,5-unsaturated D-galactopyranosyluronic acid at the non-reducing end.. Its function is as follows. Pectinolytic enzyme that degrades type I rhamnogalacturonan from plant cell walls and releases disaccharide products. Degrades rhamnogalacturonan, polygalacturonic acid and pectic acid. Has very low activity on pectin. This is Rhamnogalacturonan exolyase YesX (yesX) from Bacillus subtilis (strain 168).